A 324-amino-acid chain; its full sequence is Methionyl-tRNA formyltransferase (324 aa).

109-112 (SILP) contributes to the (6S)-5,6,7,8-tetrahydrofolate binding site.

The protein belongs to the Fmt family.

The catalysed reaction is L-methionyl-tRNA(fMet) + (6R)-10-formyltetrahydrofolate = N-formyl-L-methionyl-tRNA(fMet) + (6S)-5,6,7,8-tetrahydrofolate + H(+). Attaches a formyl group to the free amino group of methionyl-tRNA(fMet). The formyl group appears to play a dual role in the initiator identity of N-formylmethionyl-tRNA by promoting its recognition by IF2 and preventing the misappropriation of this tRNA by the elongation apparatus. The polypeptide is Methionyl-tRNA formyltransferase (Acidothermus cellulolyticus (strain ATCC 43068 / DSM 8971 / 11B)).